The chain runs to 60 residues: Large ribosomal subunit protein uL30 (60 aa).

The protein belongs to the universal ribosomal protein uL30 family. In terms of assembly, part of the 50S ribosomal subunit.

This is Large ribosomal subunit protein uL30 from Staphylococcus epidermidis (strain ATCC 35984 / DSM 28319 / BCRC 17069 / CCUG 31568 / BM 3577 / RP62A).